A 393-amino-acid chain; its full sequence is MFVHLLVLLFAAVEAIPTGRFEVVYPSMVTFRSGIKRIRFRALDEDIELRLEPAGDVIADDFTVINGENGEVDHSVNIQSLKRKLYKDAKVGAALHIDEDGSLIINGIVNSKLRIEPDTSKKASRNGIIAHRVIEVIEDEQLFHDVIILPPGLTRTFNYSEPLPDDKCVKIEYVFVTESSFTKSFQISSMETYLANMMNMVKIMFDSLDLGIEVAIIGIIKLTKENEAKLAPYIPLCSREMDSRETLDDMAEFYCNSADKLIQNADIVTLITTRPLGTFDENGYFFNIHLGIAFLDNICVYCYKYAIVKEDTGIYQLANTVAHESAHLLGCDHDGEKGSLDCSARDGYIMSWNNEKIGKKFSPCCKKRVEELITRRKINHCIVETCDGKRKRN.

Residues 1–15 (MFVHLLVLLFAAVEA) form the signal peptide. Asparagine 158 carries an N-linked (GlcNAc...) asparagine glycan. The Peptidase M12B domain occupies 167-377 (KCVKIEYVFV…RVEELITRRK (211 aa)). A Zn(2+)-binding site is contributed by histidine 323. Glutamate 324 is an active-site residue. Zn(2+) contacts are provided by histidine 327 and histidine 333. Positions 378 to 393 (INHCIVETCDGKRKRN) are disintegrin-like domain.

It belongs to the venom metalloproteinase (M12B) family. Zn(2+) is required as a cofactor. Contains several disulfide bonds. In terms of tissue distribution, expressed by the venom gland.

Its subcellular location is the secreted. In terms of biological role, metalloprotease. In Olivierus martensii (Manchurian scorpion), this protein is Venom metalloproteinase BumaMPs1.